The primary structure comprises 214 residues: Adenylate kinase (214 aa).

Residue 10-15 (GAGKGT) coordinates ATP. The interval 30–59 (STGDMLRAAVKAGTELGKQAKEIMDAGKLV) is NMP. AMP-binding positions include threonine 31, arginine 36, 57 to 59 (KLV), 85 to 88 (GFPR), and glutamine 92. Residues 122–159 (GRRVHAASGRVYHVKFNPPKVEDKDDVTGEDLSVRKDD) are LID. ATP-binding positions include arginine 123 and 132 to 133 (VY). Positions 156 and 167 each coordinate AMP. Arginine 200 is a binding site for ATP.

Belongs to the adenylate kinase family. As to quaternary structure, monomer.

Its subcellular location is the cytoplasm. It catalyses the reaction AMP + ATP = 2 ADP. The protein operates within purine metabolism; AMP biosynthesis via salvage pathway; AMP from ADP: step 1/1. Its function is as follows. Catalyzes the reversible transfer of the terminal phosphate group between ATP and AMP. Plays an important role in cellular energy homeostasis and in adenine nucleotide metabolism. The chain is Adenylate kinase from Pectobacterium atrosepticum (strain SCRI 1043 / ATCC BAA-672) (Erwinia carotovora subsp. atroseptica).